Consider the following 726-residue polypeptide: Cyclic nucleotide-gated ion channel 2 (726 aa).

At 1–127 the chain is on the cytoplasmic side; that stretch reads MPSHPNFIFR…SKRVQRWNRA (127 aa). Residues 26 to 46 form a disordered region; that stretch reads IDENSNLQINGGDSSSSGSDE. Low complexity predominate over residues 36–45; the sequence is GGDSSSSGSD. A helical membrane pass occupies residues 128–148; that stretch reads LLLARGMALAVDPLFFYALSI. Residues 149–162 are Extracellular-facing; the sequence is GRTTGPACLYMDGA. Residues 163–183 traverse the membrane as a helical segment; that stretch reads FAAVVTVLRTCLDAVHLWHVW. Residues 184 to 219 lie on the Cytoplasmic side of the membrane; sequence LQFRLAYVSRESLVVGCGKLVWDPRAIASHYARSLT. The chain crosses the membrane as a helical span at residues 220–240; that stretch reads GFWFDVIVILPVPQAVFWLVV. Topologically, residues 241–254 are extracellular; it reads PKLIREEKVKLIMT. Residues 255–275 traverse the membrane as a helical segment; the sequence is ILLLIFLFQFLPKIYHCICLM. Over 276–282 the chain is Cytoplasmic; it reads RRMQKVT. The chain crosses the membrane as a helical span at residues 283 to 303; that stretch reads GYIFGTIWWGFALNLIAYFIA. The Extracellular segment spans residues 304-424; that stretch reads SHVAGGCWYV…ANDLEPTSNW (121 aa). The chain crosses the membrane as a helical span at residues 425–445; the sequence is LEVIFSIVMVLSGLLLFTLLI. Topologically, residues 446 to 726 are cytoplasmic; that stretch reads GNIQVFLHAV…MSIRPHDHLE (281 aa). A nucleoside 3',5'-cyclic phosphate contacts are provided by residues 531-661 and Asp-600; that span reads LFRG…ARYY. The segment at 645–661 is calmodulin-binding; it reads FRYKFANERLKRTARYY. Residues 666–695 form the IQ domain; that stretch reads RTWAAVNIQMAWRRRRKRTRGENIGGSMSP.

It belongs to the cyclic nucleotide-gated cation channel (TC 1.A.1.5) family. In terms of assembly, homotetramer or heterotetramer (Potential). Binds calmodulin-1/4 with a higher affinity than calmodulin-2/3/5. Expressed in the whole plant but only weakly in roots. Strongly expressed in the expanded cotyledons of 14-day-old seedlings and detected later in leaves after the transition to flowering. Also detected in flowers during organ senescence and in the dehiscence zone of siliques.

The protein resides in the cell membrane. Functionally, acts as a cyclic nucleotide-gated ion channel. Permeable to potassium and calcium in a cyclic nucleotide-dependent fashion (cAMP or cGMP). Could also transport lithium, cesium and rubium and displays a strong selectivity against sodium. Seems to directly participate in pathogen-induced calcium influx. May function in homeostasis, re-establishing ionic balance after defense action and/or other stimuli. Could mediate the initiation of the developmentally regulated cell death programs. The polypeptide is Cyclic nucleotide-gated ion channel 2 (CNGC2) (Arabidopsis thaliana (Mouse-ear cress)).